Reading from the N-terminus, the 527-residue chain is Cytokinin dehydrogenase 3 (527 aa).

The signal sequence occupies residues 1-22; that stretch reads MEVAMVCTRVNLLILILSLCSP. The FAD-binding PCMH-type domain occupies 52–231; sequence LFHSPSAVLK…TRARILLQEA (180 aa). FAD-binding residues include alanine 87, glycine 89, and glycine 91. At histidine 92 the chain carries Pros-8alpha-FAD histidine. Serine 93, glutamine 97, aspartate 155, threonine 160, serine 166, isoleucine 170, and isoleucine 221 together coordinate FAD. N-linked (GlcNAc...) asparagine glycosylation occurs at asparagine 413. 2 residues coordinate FAD: tyrosine 471 and glutamine 509.

The protein belongs to the oxygen-dependent FAD-linked oxidoreductase family. In terms of assembly, monomer. FAD is required as a cofactor. In terms of tissue distribution, expressed in inflorescence meristems. Highly expressed in lamina joints, and mainly in the parenchyma cells and vascular bundles on the abaxial side of the lamina joint. Expressed in roots, stems, leaves and young panicles.

The protein localises to the endoplasmic reticulum. The catalysed reaction is N(6)-dimethylallyladenine + A + H2O = 3-methyl-2-butenal + adenine + AH2. Functionally, catalyzes the oxidation of cytokinins, a family of N(6)-substituted adenine derivatives, where the substituent is an isopentenyl group. Cytokinins are plant hormones essential for plant growth, development, and stress responses. Exhibits specific activities toward trans-zeatin (tZ) and isopentenyladenine (iP). Plays a role in lamina joint inclination. Regulates cell proliferation and vascular bundle number on the abaxial side of lamina joint. The sequence is that of Cytokinin dehydrogenase 3 from Oryza sativa subsp. japonica (Rice).